Here is a 307-residue protein sequence, read N- to C-terminus: Membrane protein insertase YidC 2 (307 aa).

The signal sequence occupies residues Met-1 to Gly-23. Cys-24 carries the N-palmitoyl cysteine lipid modification. Residue Cys-24 is the site of S-diacylglycerol cysteine attachment. 5 helical membrane-spanning segments follow: residues Leu-58–Leu-78, Leu-135–Phe-155, Val-179–Val-199, Thr-209–Leu-225, and Leu-231–Leu-251. The disordered stretch occupies residues Tyr-263–Arg-307. Residues Tyr-271–Gln-288 are compositionally biased toward polar residues. Positions Lys-293–Arg-307 are enriched in basic residues.

Belongs to the OXA1/ALB3/YidC family. Type 2 subfamily.

The protein localises to the cell membrane. Required for the insertion and/or proper folding and/or complex formation of integral membrane proteins into the membrane. Involved in integration of membrane proteins that insert both dependently and independently of the Sec translocase complex, as well as at least some lipoproteins. The protein is Membrane protein insertase YidC 2 of Streptococcus pyogenes serotype M1.